The sequence spans 139 residues: Probable transcription termination protein NusA (139 aa).

Residues 31–97 (DDRVVYVVTA…YNVTVSENDT (67 aa)) enclose the KH domain.

It belongs to the NusA family.

The protein localises to the cytoplasm. Functionally, participates in transcription termination. The chain is Probable transcription termination protein NusA from Halobacterium salinarum (strain ATCC 29341 / DSM 671 / R1).